The chain runs to 182 residues: Large ribosomal subunit protein uL16 (182 aa).

This sequence belongs to the universal ribosomal protein uL16 family.

The chain is Large ribosomal subunit protein uL16 from Thermococcus gammatolerans (strain DSM 15229 / JCM 11827 / EJ3).